The chain runs to 242 residues: 3-deoxy-manno-octulosonate cytidylyltransferase (242 aa).

This sequence belongs to the KdsB family.

The protein resides in the cytoplasm. It carries out the reaction 3-deoxy-alpha-D-manno-oct-2-ulosonate + CTP = CMP-3-deoxy-beta-D-manno-octulosonate + diphosphate. It functions in the pathway nucleotide-sugar biosynthesis; CMP-3-deoxy-D-manno-octulosonate biosynthesis; CMP-3-deoxy-D-manno-octulosonate from 3-deoxy-D-manno-octulosonate and CTP: step 1/1. It participates in bacterial outer membrane biogenesis; lipopolysaccharide biosynthesis. Activates KDO (a required 8-carbon sugar) for incorporation into bacterial lipopolysaccharide in Gram-negative bacteria. The chain is 3-deoxy-manno-octulosonate cytidylyltransferase from Mesorhizobium japonicum (strain LMG 29417 / CECT 9101 / MAFF 303099) (Mesorhizobium loti (strain MAFF 303099)).